Here is a 258-residue protein sequence, read N- to C-terminus: Tegument protein VP22 (258 aa).

Positions 66–143 (VQPAARGRDR…RAPPGANAVA (78 aa)) are disordered. Over residues 77–118 (AAAGTTVAAPAAAPARRSSSRASSRPPRAAADPPVLRPATRG) the composition is skewed to low complexity. A Nuclear localization signal motif is present at residues 131–134 (PRPR). Residues 204-216 (LDRMLKSAAIRIL) carry the Nuclear export signal motif. A disordered region spans residues 234-258 (RAQRPAARGSTSGGESRLRGERARP). Residues 249–258 (SRLRGERARP) show a composition bias toward basic and acidic residues.

The protein belongs to the alphaherpesvirinae VP22 tegument protein family. As to quaternary structure, interacts with gE (via C-terminus); this interaction is necessary for the recruitment of VP22 to the Golgi and its packaging into virions. Interacts with gM (via C-terminus). Interacts with VP16; this interaction allows the formation of a tripartite complex composed of VP16, VP22 and UL41/VHS. Interacts with the capsid-binding protein UL16. Interacts with host CGAS. In terms of processing, highly phosphorylated in the host cell. Packaging is selective for underphosphorylated forms.

The protein localises to the virion tegument. It localises to the host cytoplasm. Its subcellular location is the host nucleus. The protein resides in the host Golgi apparatus. In terms of biological role, tegument protein that plays different roles during the time course of infection. Participates in both the accumulation of viral mRNAs and viral protein translation at late time of infection. Modulates the RNase activity of the virion host shutoff protein UL41 probably to ensure necessary levels of key cellular mRNAs and proteins. Plays a role in microtubule reorganization that occurs after viral infection by stabilizing microtubule network. Plays a role in the inhibition of host innate immune system by targeting the CGAS enzymatic activity which is the principal cytosolic DNA sensor that detects invading viral DNA. Acts by mediating disruption of liquid-like droplets in which CGAS is activated, thereby preventing CGAS activity. The polypeptide is Tegument protein VP22 (Bovine herpesvirus 1.1 (strain Cooper) (BoHV-1)).